We begin with the raw amino-acid sequence, 29 residues long: Cytochrome b6-f complex subunit 8 (29 aa).

Residues 3–23 form a helical membrane-spanning segment; sequence IDVLGWVALLVVFTWSIAMVV.

It belongs to the PetN family. As to quaternary structure, the 4 large subunits of the cytochrome b6-f complex are cytochrome b6, subunit IV (17 kDa polypeptide, PetD), cytochrome f and the Rieske protein, while the 4 small subunits are PetG, PetL, PetM and PetN. The complex functions as a dimer.

The protein resides in the cellular thylakoid membrane. Functionally, component of the cytochrome b6-f complex, which mediates electron transfer between photosystem II (PSII) and photosystem I (PSI), cyclic electron flow around PSI, and state transitions. This is Cytochrome b6-f complex subunit 8 from Mastigocladus laminosus (Fischerella sp.).